A 1500-amino-acid chain; its full sequence is Host cell factor (1500 aa).

Kelch repeat units follow at residues 85–133 (LMVV…VEGT), 135–181 (MFVF…RLGH), 189–237 (KIFL…TYGD), 259–307 (NLLI…MIGN), and 308–373 (KMYV…GIQS). Ser477 is modified (phosphoserine). Polar residues predominate over residues 517–528 (LLQSMSQPSSPA). Positions 517 to 543 (LLQSMSQPSSPASRADKDPLSSGGGTT) are disordered. Ser958 and Ser966 each carry phosphoserine. Residues 1024–1061 (SEGQHGSEENENNGENATSSSASALFTGGDTAGPSRAQ) are disordered. The segment covering 1036–1047 (NGENATSSSASA) has biased composition (low complexity). Position 1126 is a phosphothreonine (Thr1126). The segment at 1161-1185 (IGSLKENQDENKKFKQRQESSPSQN) is disordered. Residues 1166-1178 (ENQDENKKFKQRQ) show a composition bias toward basic and acidic residues. 2 consecutive Fibronectin type-III domains span residues 1244–1341 (VQST…TCLP) and 1346–1457 (APSA…DPAA). The interval 1458–1500 (AKQHTPTVTPNLKRGPEKSTIGSSNIANTFCSPHKRGRNGLHD) is disordered. The Bipartite nuclear localization signal motif lies at 1470-1495 (KRGPEKSTIGSSNIANTFCSPHKRGR). Residues 1477–1488 (TIGSSNIANTFC) show a composition bias toward polar residues. The residue at position 1489 (Ser1489) is a Phosphoserine. Residues 1490-1500 (PHKRGRNGLHD) are compositionally biased toward basic residues.

In terms of assembly, core component of several methyltransferase-containing complexes. Component of the SET1 complex, composed at least of the catalytic subunit Set1, wds/WDR5, Wdr82, Rbbp5, ash2, Cfp1/CXXC1, hcf and Dpy-30L1. Component of the MLL3/4 complex composed at least of the catalytic subunit trr, ash2, Rbbp5, Dpy-30L1, wds, hcf, ptip, Pa1, Utx, Lpt and Ncoa6. Component of the Ada2a-containing (ATAC) complex composed of at least Ada2a, Atac1, Hcf, Ada3, Gcn5, Mocs2B, Charac-14, Atac3, Atac2, NC2beta and wds. Proteolytic cleavage occurs between amino acids 900 and 1100 within the non-conserved central region, giving rise to two independent but tightly associated N- and C-terminal subunits.

Its subcellular location is the nucleus. Functionally, may be involved in control of the cell cycle. In Drosophila melanogaster (Fruit fly), this protein is Host cell factor.